Consider the following 202-residue polypeptide: Small ribosomal subunit protein uS4c (202 aa).

The region spanning 90-158 (MRLDNIIFRL…MKRSRDSYEK (69 aa)) is the S4 RNA-binding domain.

It belongs to the universal ribosomal protein uS4 family. Part of the 30S ribosomal subunit. Contacts protein S5. The interaction surface between S4 and S5 is involved in control of translational fidelity.

The protein resides in the plastid. Its subcellular location is the chloroplast. Its function is as follows. One of the primary rRNA binding proteins, it binds directly to 16S rRNA where it nucleates assembly of the body of the 30S subunit. With S5 and S12 plays an important role in translational accuracy. The sequence is that of Small ribosomal subunit protein uS4c (rps4) from Anthoceros angustus (Hornwort).